The primary structure comprises 845 residues: Translation initiation factor IF-2 (845 aa).

Disordered stretches follow at residues 44–91 (KRRK…NLSS) and 119–256 (ARRA…NQEP). Residues 119–129 (ARRAKEREESL) show a composition bias toward basic and acidic residues. Residues 139 to 148 (DETPQEEEEP) show a composition bias toward acidic residues. A compositionally biased stretch (polar residues) spans 156–165 (SLSPAQSQIE). 2 stretches are compositionally biased toward basic and acidic residues: residues 179–194 (IEKR…DRNS) and 202–217 (SEVR…DEKR). Residues 343 to 510 (LRPPVVTIMG…AILLQAEILD (168 aa)) enclose the tr-type G domain. Positions 352-359 (GHVDHGKT) are G1. Residue 352–359 (GHVDHGKT) coordinates GTP. Residues 377–381 (GITQH) form a G2 region. The interval 398-401 (DTPG) is G3. GTP is bound by residues 398–402 (DTPGH) and 452–455 (NKID). The tract at residues 452–455 (NKID) is G4. Positions 488-490 (SAK) are G5.

Belongs to the TRAFAC class translation factor GTPase superfamily. Classic translation factor GTPase family. IF-2 subfamily.

It is found in the cytoplasm. Functionally, one of the essential components for the initiation of protein synthesis. Protects formylmethionyl-tRNA from spontaneous hydrolysis and promotes its binding to the 30S ribosomal subunits. Also involved in the hydrolysis of GTP during the formation of the 70S ribosomal complex. This Bartonella henselae (strain ATCC 49882 / DSM 28221 / CCUG 30454 / Houston 1) (Rochalimaea henselae) protein is Translation initiation factor IF-2.